The primary structure comprises 242 residues: UPF0246 protein SPP_1571 (242 aa).

Belongs to the UPF0246 family.

The chain is UPF0246 protein SPP_1571 from Streptococcus pneumoniae (strain P1031).